A 378-amino-acid polypeptide reads, in one-letter code: Beta-1,3-N-acetylglucosaminyltransferase lunatic fringe (378 aa).

The Cytoplasmic portion of the chain corresponds to 1–8; sequence MLQRCGRR. The helical; Signal-anchor for type II membrane protein transmembrane segment at 9-29 threads the bilayer; that stretch reads LLLALVGALLACLLVLTADPP. The Lumenal portion of the chain corresponds to 30-378; sequence PTPMPAERGR…TPWCPRSAIF (349 aa). Residues 85-108 are disordered; sequence RDADPPPGVASRQGDGHPRPPAEV. R128 lines the substrate pocket. The N-linked (GlcNAc...) asparagine glycan is linked to N166. Disulfide bonds link C167-C178 and C196-C259. D200 is a binding site for substrate. D201 lines the Mn(2+) pocket. D289 is an active-site residue. H313 is a Mn(2+) binding site. An intrachain disulfide couples C363 to C372.

This sequence belongs to the glycosyltransferase 31 family. It depends on Mn(2+) as a cofactor. The cofactor is Co(2+). Post-translationally, a soluble form may be derived from the membrane form by proteolytic processing. As to expression, detected at 12.5 dpc in all tissues examined with the highest level observed in adult brain and spleen. Detected in the dental epithelium.

Its subcellular location is the golgi apparatus. The protein localises to the golgi apparatus membrane. It carries out the reaction 3-O-(alpha-L-fucosyl)-L-threonyl-[EGF-like domain protein] + UDP-N-acetyl-alpha-D-glucosamine = 3-O-(N-acetyl-beta-D-glucosaminyl-(1-&gt;3)-alpha-L-fucosyl)-L-threonyl-[EGF-like domain protein] + UDP + H(+). The enzyme catalyses 3-O-(alpha-L-fucosyl)-L-seryl-[EGF-like domain protein] + UDP-N-acetyl-alpha-D-glucosamine = 3-O-(N-acetyl-beta-D-glucosaminyl-(1-&gt;3)-alpha-L-fucosyl)-L-seryl-[EGF-like domain protein] + UDP + H(+). Glycosyltransferase that initiates the elongation of O-linked fucose residues attached to EGF-like repeats in the extracellular domain of Notch molecules. Modulates NOTCH1 activity by modifying O-fucose residues at specific EGF-like domains resulting in inhibition of NOTCH1 activation by JAG1 and enhancement of NOTCH1 activation by DLL1 via an increase in its binding to DLL1. Decreases the binding of JAG1 to NOTCH2 but not that of DLL1. Essential mediator of somite segmentation and patterning. During somite boundary formation, it restricts Notch activity in the presomitic mesoderm to a boundary-forming territory in the posterior half of the prospective somite. In this region, Notch function activates a set of genes that are involved in boundary formation and in anterior-posterior somite identity. Ectopically expressed in the thymus, Lfgn inhibits Notch signaling which results in inhibition of T-cell commitment and promotes B-cell development in lymphoid progenitors. May play a role in boundary formation of the enamel knot. The polypeptide is Beta-1,3-N-acetylglucosaminyltransferase lunatic fringe (Mus musculus (Mouse)).